Reading from the N-terminus, the 547-residue chain is Cytochrome P450 monooxygenase 81 (547 aa).

The next 2 membrane-spanning stretches (helical) occupy residues 6-23 (IPTQLGIAGAVAVLLFLL) and 106-124 (AFFAMTYLLFGPGLLATAG). Position 483 (Cys-483) interacts with heme. Residues Asn-503 and Asn-516 are each glycosylated (N-linked (GlcNAc...) asparagine).

This sequence belongs to the cytochrome P450 family. Heme serves as cofactor.

The protein resides in the membrane. The protein operates within secondary metabolite biosynthesis. Functionally, cytochrome P450 monooxygenase that is able to use dehydroabietic acid as a substrate for oxidation. The protein is Cytochrome P450 monooxygenase 81 of Postia placenta (strain ATCC 44394 / Madison 698-R) (Brown rot fungus).